Consider the following 403-residue polypeptide: Palmitoyltransferase ZDHHC23-A (403 aa).

Topologically, residues 1–70 (MKRERFKPPE…ADRLGVSCCT (70 aa)) are cytoplasmic. A helical membrane pass occupies residues 71-91 (VGPLRLELSVLPPMVLIPGLL). Residue R92 is a topological domain, lumenal. A helical membrane pass occupies residues 93–113 (VAAINCLLGVIILTALPLLVL). At 114 to 125 (WYYYMTHRRKRR) the chain is on the cytoplasmic side. The helical transmembrane segment at 126-146 (TLFFLSLALFSLAYMYYLFLT) threads the bilayer. Residues 147–153 (EIVPRGD) are Lumenal-facing. A helical transmembrane segment spans residues 154-174 (VTHLQVVTATTGMMLTLISLV). At 175–268 (RTKQGPGFVK…NSCVGQANHR (94 aa)) the chain is on the cytoplasmic side. The DHHC domain maps to 225–275 (KKCPVCQLVRPPRAGHCRICGACVLRMDHHCVWINSCVGQANHRQFILTLL). C255 (S-palmitoyl cysteine intermediate) is an active-site residue. Residues 269 to 289 (QFILTLLLFLLTSFYGISLVL) form a helical membrane-spanning segment. At 290–319 (RSICPKQSLFTAMLYCPGVYNQYSTALCFT) the chain is on the lumenal side. The chain crosses the membrane as a helical span at residues 320 to 340 (CVWYSVIITGGLLHLFILQII). At 341–403 (NVSCNVTERE…GSSLNLTDMV (63 aa)) the chain is on the cytoplasmic side.

This sequence belongs to the DHHC palmitoyltransferase family.

Its subcellular location is the golgi apparatus membrane. It is found in the golgi apparatus. The protein resides in the trans-Golgi network membrane. The enzyme catalyses L-cysteinyl-[protein] + hexadecanoyl-CoA = S-hexadecanoyl-L-cysteinyl-[protein] + CoA. Functionally, palmitoyltransferase that could catalyze the addition of palmitate onto various protein substrates and be involved in a variety of cellular processes. The protein is Palmitoyltransferase ZDHHC23-A (zdhhc23a) of Danio rerio (Zebrafish).